Reading from the N-terminus, the 138-residue chain is PilB-specific inhibitory protein CpiA (138 aa).

Interacts with PilB but not with TfpB.

In terms of biological role, acts as a PilB inhibitor to control natural transformation. Inhibits type IV pili (T4P) extension by specifically binding and inhibiting the pilus extension ATPase PilB but not TfpB. This activity probably modulates T4P extension under different environmental conditions. This Acinetobacter baylyi (strain ATCC 33305 / BD413 / ADP1) protein is PilB-specific inhibitory protein CpiA.